Reading from the N-terminus, the 393-residue chain is MVAAAPSNKEPLPDMMTSIRLDQSGRVEIIDQLLLPHSVVWMPVSTPEEAFDAIKTMRIRGAPAIASLAALTLRSYLSSSSSPVSSSSSSSDVISWVGQTIDYLQSSRPTAVNLGEAMDRIRAALKDSEAQNQTAGDIIQRVKKICGDVHDEDLERNMKMGRLGAEWLWKKRGGGKKGLKVMTVCNTGSLATSGYGTAIGVITALFQEDHLDTAYYAQTTPYHQGSRLTSLELTTLQIPACMICDTMLGSLFQHEDIDGVIVGADRVVKNGDTANKIGTYQAAVLAQRHNVPFMVVAPVTTIDLSLPTGAEIHIEHRPAAEATQVRGLDTETGKLSVVRITPEGVGEGDKPWQRVYNPSFDVTPAELISAVVTEKGVAERKEGEKSIDVASIC.

Residue aspartate 265 is the Proton donor of the active site.

This sequence belongs to the eIF-2B alpha/beta/delta subunits family. MtnA subfamily.

The protein resides in the cytoplasm. Its subcellular location is the nucleus. It carries out the reaction 5-(methylsulfanyl)-alpha-D-ribose 1-phosphate = 5-(methylsulfanyl)-D-ribulose 1-phosphate. It participates in amino-acid biosynthesis; L-methionine biosynthesis via salvage pathway; L-methionine from S-methyl-5-thio-alpha-D-ribose 1-phosphate: step 1/6. Its function is as follows. Catalyzes the interconversion of methylthioribose-1-phosphate (MTR-1-P) into methylthioribulose-1-phosphate (MTRu-1-P). In Cryptococcus neoformans var. neoformans serotype D (strain B-3501A) (Filobasidiella neoformans), this protein is Methylthioribose-1-phosphate isomerase.